A 282-amino-acid chain; its full sequence is 4-hydroxy-tetrahydrodipicolinate reductase (282 aa).

NAD(+) is bound by residues 14–19 (GAMGRM) and 115–117 (GTT). His171 serves as the catalytic Proton donor/acceptor. His172 serves as a coordination point for (S)-2,3,4,5-tetrahydrodipicolinate. The Proton donor role is filled by Lys175. 181 to 182 (GT) is a binding site for (S)-2,3,4,5-tetrahydrodipicolinate.

This sequence belongs to the DapB family.

It localises to the cytoplasm. The enzyme catalyses (S)-2,3,4,5-tetrahydrodipicolinate + NAD(+) + H2O = (2S,4S)-4-hydroxy-2,3,4,5-tetrahydrodipicolinate + NADH + H(+). The catalysed reaction is (S)-2,3,4,5-tetrahydrodipicolinate + NADP(+) + H2O = (2S,4S)-4-hydroxy-2,3,4,5-tetrahydrodipicolinate + NADPH + H(+). It participates in amino-acid biosynthesis; L-lysine biosynthesis via DAP pathway; (S)-tetrahydrodipicolinate from L-aspartate: step 4/4. Its function is as follows. Catalyzes the conversion of 4-hydroxy-tetrahydrodipicolinate (HTPA) to tetrahydrodipicolinate. The protein is 4-hydroxy-tetrahydrodipicolinate reductase of Prochlorococcus marinus (strain NATL2A).